Here is a 309-residue protein sequence, read N- to C-terminus: MITFLPIIFSILIVVTFVIGNFANGFIALVNSIEWFKRQKISFADQILTALAVSRVGLLWVLVLNWYATELNPAFNSIEVRITAYNVWAVINHFSNWLATSLSIFYLLKIANFSNLIFLHLKRRVKSVVLVILLGPLLFLVCHLFVINMNQIIWTKEYEGNMTWKIKLRSAMYLSNTTVTILANLVPFTLTLISFLLLICSLCKHLKKMQLHGKGSQDPSMKVHIKALQTVTSFLLLCAIYFLSIIMSVWSFESLENKPVFMFCEAIAFSYPSTHPFILIWGNKKLKQTFLSVLWHVRYWVKGEKPSSS.

Met-1 is a topological domain (extracellular). A helical transmembrane segment spans residues 2 to 22 (ITFLPIIFSILIVVTFVIGNF). Residues 23–46 (ANGFIALVNSIEWFKRQKISFADQ) are Cytoplasmic-facing. A helical membrane pass occupies residues 47-67 (ILTALAVSRVGLLWVLVLNWY). The Extracellular portion of the chain corresponds to 68–86 (ATELNPAFNSIEVRITAYN). A helical membrane pass occupies residues 87-107 (VWAVINHFSNWLATSLSIFYL). Over 108–126 (LKIANFSNLIFLHLKRRVK) the chain is Cytoplasmic. A helical membrane pass occupies residues 127-147 (SVVLVILLGPLLFLVCHLFVI). The Extracellular portion of the chain corresponds to 148 to 178 (NMNQIIWTKEYEGNMTWKIKLRSAMYLSNTT). Asn-161 and Asn-176 each carry an N-linked (GlcNAc...) asparagine glycan. A helical transmembrane segment spans residues 179–199 (VTILANLVPFTLTLISFLLLI). Over 200-229 (CSLCKHLKKMQLHGKGSQDPSMKVHIKALQ) the chain is Cytoplasmic. A helical transmembrane segment spans residues 230–250 (TVTSFLLLCAIYFLSIIMSVW). Residues 251 to 259 (SFESLENKP) lie on the Extracellular side of the membrane. A helical transmembrane segment spans residues 260 to 280 (VFMFCEAIAFSYPSTHPFILI). The Cytoplasmic portion of the chain corresponds to 281 to 309 (WGNKKLKQTFLSVLWHVRYWVKGEKPSSS).

Belongs to the G-protein coupled receptor T2R family. Expressed in subsets of taste receptor cells of the tongue and exclusively in gustducin-positive cells. Expressed on ciliated airway epithelium.

Its subcellular location is the membrane. The protein localises to the cell projection. It localises to the cilium membrane. Functionally, receptor that may play a role in the perception of bitterness and is gustducin-linked. May play a role in sensing the chemical composition of the gastrointestinal content. The activity of this receptor may stimulate alpha gustducin, mediate PLC-beta-2 activation and lead to the gating of TRPM5. In airway epithelial cells, binding of bitter compounds increases the intracellular calcium ion concentration and stimulates ciliary beat frequency. This Homo sapiens (Human) protein is Taste receptor type 2 member 46 (TAS2R46).